We begin with the raw amino-acid sequence, 333 residues long: Cytosolic sulfotransferase 10 (333 aa).

76-81 (KSGTTW) contributes to the 3'-phosphoadenylyl sulfate binding site. The Proton acceptor role is filled by H146. 3'-phosphoadenylyl sulfate contacts are provided by residues R168, S176, Y234, and 299 to 301 (RKG).

Belongs to the sulfotransferase 1 family. In terms of tissue distribution, expressed in roots.

The protein localises to the cytoplasm. In terms of biological role, sulfotransferase that utilizes 3'-phospho-5'-adenylyl sulfate (PAPS) as sulfonate donor to specifically catalyze the sulfate conjugation of brassinosteroids, including castasterone (CS), brassinolide (BL), related 24-epimers, and the naturally occurring (22R, 23R)-28-homobrassinosteroids. No activity on phenolic acids, desulfo-glucosinolates, flavonoids, steroids, gibberellic acids, cytokinins, phenylpropanoids, hydroxyjasmonates and coumarins. The protein is Cytosolic sulfotransferase 10 (SOT10) of Arabidopsis thaliana (Mouse-ear cress).